The sequence spans 253 residues: MICOS complex subunit mic25 (253 aa).

The interval 1–89 (MGGSESTGRK…GAHKPTAAGV (89 aa)) is disordered. Gly-2 carries the N-myristoyl glycine lipid modification. The segment covering 28–44 (RLSDEVVNRMKDSDLPS) has biased composition (basic and acidic residues). Residues 48–64 (STSAASGTASAPAAFPS) show a composition bias toward low complexity. Residues 94–178 (AEEDLYRRYE…EQLSSIEKKN (85 aa)) adopt a coiled-coil conformation. In terms of domain architecture, CHCH spans 206–248 (DPVCMNLQADILKCYSENKQERLNCSNLAKEYRKCVSAAQKNL). 2 short sequence motifs (cx9C motif) span residues 209–219 (CMNLQADILKC) and 230–240 (CSNLAKEYRKC). 2 cysteine pairs are disulfide-bonded: Cys-209–Cys-240 and Cys-219–Cys-230.

It belongs to the MICOS complex subunit Mic19 family. Metazoan Mic25 subfamily. As to quaternary structure, component of the mitochondrial contact site and cristae organizing system (MICOS) complex (also known as MINOS or MitOS complex).

It localises to the mitochondrion inner membrane. Its function is as follows. Component of the MICOS complex, a large protein complex of the mitochondrial inner membrane that plays crucial roles in the maintenance of crista junctions, inner membrane architecture, and formation of contact sites to the outer membrane. The polypeptide is MICOS complex subunit mic25 (chchd6) (Xenopus tropicalis (Western clawed frog)).